The sequence spans 649 residues: Endoplasmic reticulum membrane protein 65 (649 aa).

The tract at residues 1 to 55 (MGSNTSPGQADPLESENESSLTSRFLPNKRDGGKDNESVIPEKEEPDLNEPVLAV) is disordered. The Cytoplasmic segment spans residues 1-165 (MGSNTSPGQA…LATPYAIEKT (165 aa)). The span at 28–43 (NKRDGGKDNESVIPEK) shows a compositional bias: basic and acidic residues. S94 is modified (phosphoserine). Residues 166 to 186 (FLFGWFVSVDSFLYIFTLFPI) traverse the membrane as a helical segment. Residues 187 to 302 (RVLISFFTLS…NFWNPAGWMT (116 aa)) lie on the Lumenal side of the membrane. N215 carries N-linked (GlcNAc...) asparagine glycosylation. Residues 303-323 (FFYYFAISLAYMVLHTLVLLY) traverse the membrane as a helical segment. Residues 324 to 366 (QIITLNVTVNSYSNAVLALLMSNQLVEIKGAVFKKFEKENLFQ) are Cytoplasmic-facing. Residues 367 to 387 (LTCSDVVERFQITIMVIIIFL) traverse the membrane as a helical segment. Topologically, residues 388–414 (RNLAELYTTSSLDQPLLTFKRLKTLLA) are lumenal. Residues 415 to 435 (PFFWVIGSELFVDWLKHAFII) form a helical membrane-spanning segment. The Cytoplasmic segment spans residues 436–479 (KFNYIKPSIYSRFTDVLCHDYVASGAQLTQTVTGCSQQVARRMG). The chain crosses the membrane as a helical span at residues 480-500 (LPVLPLVCVFIRTSMQTWSMF). At 501–557 (RSTHSMKQEIAKSIGTIFPTKDNYVYYLPNKEANTYNAGKEASWETLLLSVVRGKSG) the chain is on the lumenal side. Residues 558-578 (IAFLFFMAIMLKLLLGKAILA) traverse the membrane as a helical segment. Topologically, residues 579–649 (ITQSRYESMQ…RYAMHSKRIW (71 aa)) are cytoplasmic.

Belongs to the TAPT1 family. Interacts with slp1.

It localises to the endoplasmic reticulum membrane. Functionally, may be involved in membrane protein folding. The chain is Endoplasmic reticulum membrane protein 65 from Schizosaccharomyces pombe (strain 972 / ATCC 24843) (Fission yeast).